The primary structure comprises 120 residues: Ribosome-binding factor A (120 aa).

Belongs to the RbfA family. As to quaternary structure, monomer. Binds 30S ribosomal subunits, but not 50S ribosomal subunits or 70S ribosomes.

It is found in the cytoplasm. One of several proteins that assist in the late maturation steps of the functional core of the 30S ribosomal subunit. Associates with free 30S ribosomal subunits (but not with 30S subunits that are part of 70S ribosomes or polysomes). Required for efficient processing of 16S rRNA. May interact with the 5'-terminal helix region of 16S rRNA. This is Ribosome-binding factor A from Rickettsia rickettsii (strain Iowa).